The primary structure comprises 382 residues: MKAVHFGAGNIGRGFVGLLLHEAGYEVVFADVADALISQLASASSYDVHEVGENPAVKTVSGFRAFNSASQEAAVVEEISTADVLTTAVGPHILKFVAPVIARGLAVRPADLPPLQVMACENAINATDLLHTEIRAAWDDSAGDLDAVAVFANTAVDRIVPNQAPGQGLDVTVETFYEWVIDRTPFGGNAPKIPGATFVDELGPYIERKLFTVNTGHASAAYFGYAAGLEKISDAMADPAVAAKVRAVLEETKELLVAKHGFEEAEQEAYVQKILSRFTNPHLPDTVNRVGRAPLRKLSRHERFVGPAAELAERGVTPAALLEAMSAALRFDDGNDDEAVELTNLLSELDAAAAVERITELTPTHPLFPALQKLVEDRQAEA.

An NAD(+)-binding site is contributed by 3 to 14 (AVHFGAGNIGRG).

The protein belongs to the mannitol dehydrogenase family.

It catalyses the reaction D-mannitol 1-phosphate + NAD(+) = beta-D-fructose 6-phosphate + NADH + H(+). The protein is Mannitol-1-phosphate 5-dehydrogenase of Paenarthrobacter aurescens (strain TC1).